The chain runs to 294 residues: Acetyl-coenzyme A carboxylase carboxyl transferase subunit beta (294 aa).

Residues valine 25–histidine 294 enclose the CoA carboxyltransferase N-terminal domain. The Zn(2+) site is built by cysteine 29, cysteine 32, cysteine 48, and cysteine 51. The segment at cysteine 29–cysteine 51 adopts a C4-type zinc-finger fold.

Belongs to the AccD/PCCB family. Acetyl-CoA carboxylase is a heterohexamer composed of biotin carboxyl carrier protein (AccB), biotin carboxylase (AccC) and two subunits each of ACCase subunit alpha (AccA) and ACCase subunit beta (AccD). It depends on Zn(2+) as a cofactor.

Its subcellular location is the cytoplasm. The catalysed reaction is N(6)-carboxybiotinyl-L-lysyl-[protein] + acetyl-CoA = N(6)-biotinyl-L-lysyl-[protein] + malonyl-CoA. Its pathway is lipid metabolism; malonyl-CoA biosynthesis; malonyl-CoA from acetyl-CoA: step 1/1. Its function is as follows. Component of the acetyl coenzyme A carboxylase (ACC) complex. Biotin carboxylase (BC) catalyzes the carboxylation of biotin on its carrier protein (BCCP) and then the CO(2) group is transferred by the transcarboxylase to acetyl-CoA to form malonyl-CoA. In Aliivibrio fischeri (strain ATCC 700601 / ES114) (Vibrio fischeri), this protein is Acetyl-coenzyme A carboxylase carboxyl transferase subunit beta.